Here is a 290-residue protein sequence, read N- to C-terminus: Glycine--tRNA ligase alpha subunit (290 aa).

Belongs to the class-II aminoacyl-tRNA synthetase family. As to quaternary structure, tetramer of two alpha and two beta subunits.

The protein resides in the cytoplasm. The enzyme catalyses tRNA(Gly) + glycine + ATP = glycyl-tRNA(Gly) + AMP + diphosphate. The sequence is that of Glycine--tRNA ligase alpha subunit from Prochlorococcus marinus (strain NATL1A).